The sequence spans 1594 residues: Protein SHORTAGE IN CHIASMATA 1 (1594 aa).

Disordered stretches follow at residues 1148 to 1180 (DSRS…SKKK), 1239 to 1283 (APFK…QPDF), 1396 to 1426 (AADI…YADN), 1491 to 1523 (RSRA…NTKR), and 1536 to 1594 (GGNK…LVWK). A compositionally biased stretch (low complexity) spans 1151 to 1165 (SVMTDSSSSVSSGPD). Basic and acidic residues-rich tracts occupy residues 1254–1265 (PSKDPERFDKKS) and 1402–1414 (SSER…DSKY). Positions 1577 to 1594 (QSLSYTANGTGQTKLVWK) are enriched in polar residues.

Belongs to the XPF family. Interacts with PTD. In terms of tissue distribution, highest levels in young buds, where male meiosis occurs. Also present at low levels in plantlets, leaves, flowers, and roots.

It localises to the nucleus. Its function is as follows. Essential for the formation of class I meiotic crossovers. This is Protein SHORTAGE IN CHIASMATA 1 from Arabidopsis thaliana (Mouse-ear cress).